Reading from the N-terminus, the 28-residue chain is uncharacterized protein (28 aa).

Basic residues predominate over residues 1–18 (MLPRKYKPAYKKQAHRVK). Residues 1–28 (MLPRKYKPAYKKQAHRVKSNPQPAYTFQ) form a disordered region. Over residues 19–28 (SNPQPAYTFQ) the composition is skewed to polar residues.

This is an uncharacterized protein from Saccharomyces cerevisiae (strain ATCC 204508 / S288c) (Baker's yeast).